Here is a 240-residue protein sequence, read N- to C-terminus: Aliphatic sulfonates import ATP-binding protein SsuB 2 (240 aa).

The ABC transporter domain occupies 2–218 (VRTRELRRGF…RHSAPEFIHA (217 aa)). An ATP-binding site is contributed by 34–41 (GRSGSGKS).

It belongs to the ABC transporter superfamily. Aliphatic sulfonates importer (TC 3.A.1.17.2) family. As to quaternary structure, the complex is composed of two ATP-binding proteins (SsuB), two transmembrane proteins (SsuC) and a solute-binding protein (SsuA).

Its subcellular location is the cell membrane. The catalysed reaction is ATP + H2O + aliphatic sulfonate-[sulfonate-binding protein]Side 1 = ADP + phosphate + aliphatic sulfonateSide 2 + [sulfonate-binding protein]Side 1.. In terms of biological role, part of the ABC transporter complex SsuABC involved in aliphatic sulfonates import. Responsible for energy coupling to the transport system. This is Aliphatic sulfonates import ATP-binding protein SsuB 2 from Nocardia farcinica (strain IFM 10152).